Here is a 412-residue protein sequence, read N- to C-terminus: Serine hydroxymethyltransferase (412 aa).

Residues Leu117 and Gly121–Leu123 contribute to the (6S)-5,6,7,8-tetrahydrofolate site. The residue at position 226 (Lys226) is an N6-(pyridoxal phosphate)lysine. Glu241 is a binding site for (6S)-5,6,7,8-tetrahydrofolate.

It belongs to the SHMT family. In terms of assembly, homodimer. Requires pyridoxal 5'-phosphate as cofactor.

The protein resides in the cytoplasm. It carries out the reaction (6R)-5,10-methylene-5,6,7,8-tetrahydrofolate + glycine + H2O = (6S)-5,6,7,8-tetrahydrofolate + L-serine. Its pathway is one-carbon metabolism; tetrahydrofolate interconversion. The protein operates within amino-acid biosynthesis; glycine biosynthesis; glycine from L-serine: step 1/1. Its function is as follows. Catalyzes the reversible interconversion of serine and glycine with tetrahydrofolate (THF) serving as the one-carbon carrier. This reaction serves as the major source of one-carbon groups required for the biosynthesis of purines, thymidylate, methionine, and other important biomolecules. Also exhibits THF-independent aldolase activity toward beta-hydroxyamino acids, producing glycine and aldehydes, via a retro-aldol mechanism. The polypeptide is Serine hydroxymethyltransferase (Staphylococcus carnosus (strain TM300)).